Reading from the N-terminus, the 418-residue chain is L-rhamnose isomerase (418 aa).

Mn(2+)-binding residues include His262, Asp294, and Asp296.

It belongs to the rhamnose isomerase family. Homotetramer. Requires Mn(2+) as cofactor.

It is found in the cytoplasm. The enzyme catalyses L-rhamnopyranose = L-rhamnulose. Its pathway is carbohydrate degradation; L-rhamnose degradation; glycerone phosphate from L-rhamnose: step 1/3. In terms of biological role, catalyzes the interconversion of L-rhamnose and L-rhamnulose. The chain is L-rhamnose isomerase from Yersinia pestis bv. Antiqua (strain Antiqua).